The sequence spans 447 residues: Argininosuccinate synthase (447 aa).

ATP contacts are provided by residues Ala-17 to Ser-25 and Ala-43. Position 99 (Tyr-99) interacts with L-citrulline. Residues Gly-129 and Thr-131 each contribute to the ATP site. 3 residues coordinate L-aspartate: Thr-131, Asn-135, and Asp-136. Asn-135 provides a ligand contact to L-citrulline. Asp-136 contributes to the ATP binding site. L-citrulline contacts are provided by Arg-139 and Ser-192. Residue Asp-194 participates in ATP binding. 3 residues coordinate L-citrulline: Thr-201, Glu-203, and Glu-280.

The protein belongs to the argininosuccinate synthase family. Type 2 subfamily. Homotetramer.

Its subcellular location is the cytoplasm. The enzyme catalyses L-citrulline + L-aspartate + ATP = 2-(N(omega)-L-arginino)succinate + AMP + diphosphate + H(+). It functions in the pathway amino-acid biosynthesis; L-arginine biosynthesis; L-arginine from L-ornithine and carbamoyl phosphate: step 2/3. This Citrobacter koseri (strain ATCC BAA-895 / CDC 4225-83 / SGSC4696) protein is Argininosuccinate synthase.